The sequence spans 373 residues: Opsin Rh1 (373 aa).

The Extracellular portion of the chain corresponds to Met1–Thr54. Asn20 carries an N-linked (GlcNAc...) asparagine glycan. The helical transmembrane segment at Ala55–Phe75 threads the bilayer. Residues Ala76–Asn86 are Cytoplasmic-facing. Residues Leu87–Met107 traverse the membrane as a helical segment. Residues Gly108 to Asp124 are Extracellular-facing. Cys123 and Cys200 form a disulfide bridge. A helical transmembrane segment spans residues Ile125–Ser145. Residues Leu146–Thr162 are Cytoplasmic-facing. A helical membrane pass occupies residues Ile163–Ala183. Over Pro184–Ser219 the chain is Extracellular. Asn196 is a glycosylation site (N-linked (GlcNAc...) asparagine). A helical transmembrane segment spans residues Ile220–Ala240. The Cytoplasmic portion of the chain corresponds to Val241 to Lys276. Residues Val277 to Cys297 form a helical membrane-spanning segment. At Met298–Pro308 the chain is on the extracellular side. Residues Leu309–Ile331 traverse the membrane as a helical segment. An N6-(retinylidene)lysine modification is found at Lys319. The Cytoplasmic segment spans residues Ser332–Ala373. The interval Asp354–Ala373 is disordered. Polar residues predominate over residues Ser358–Ala373.

This sequence belongs to the G-protein coupled receptor 1 family. Opsin subfamily. In terms of processing, phosphorylated on some or all of the serine and threonine residues present in the C-terminal region.

The protein localises to the cell projection. It localises to the rhabdomere membrane. Functionally, visual pigments are the light-absorbing molecules that mediate vision. They consist of an apoprotein, opsin, covalently linked to cis-retinal. The polypeptide is Opsin Rh1 (ninaE) (Drosophila pseudoobscura pseudoobscura (Fruit fly)).